Consider the following 177-residue polypeptide: Bifunctional protein PyrR (177 aa).

The short motif at 99 to 111 is the PRPP-binding element; the sequence is VILIDDVLYTGRT.

The protein belongs to the purine/pyrimidine phosphoribosyltransferase family. PyrR subfamily. In terms of assembly, homodimer and homohexamer; in equilibrium.

It carries out the reaction UMP + diphosphate = 5-phospho-alpha-D-ribose 1-diphosphate + uracil. Its function is as follows. Regulates transcriptional attenuation of the pyrimidine nucleotide (pyr) operon by binding in a uridine-dependent manner to specific sites on pyr mRNA. This disrupts an antiterminator hairpin in the RNA and favors formation of a downstream transcription terminator, leading to a reduced expression of downstream genes. Also displays a weak uracil phosphoribosyltransferase activity which is not physiologically significant. The sequence is that of Bifunctional protein PyrR from Pediococcus pentosaceus (strain ATCC 25745 / CCUG 21536 / LMG 10740 / 183-1w).